Reading from the N-terminus, the 212-residue chain is ECF RNA polymerase sigma factor SigD (212 aa).

The tract at residues 49–119 (ETIRPIVVRY…VADAHRAAGR (71 aa)) is sigma-70 factor domain-2. Residues 75-78 (DVAQ) carry the Polymerase core binding motif. The segment at 152–201 (NELLEILPAKQREILILRVVVGLSAEETAAAVGSTTGAVRVAQHRALQRL) is sigma-70 factor domain-4. A DNA-binding region (H-T-H motif) is located at residues 176–195 (AEETAAAVGSTTGAVRVAQH).

The protein belongs to the sigma-70 factor family. ECF subfamily. Interacts transiently with the RNA polymerase catalytic core formed by RpoA, RpoB, RpoC and RpoZ (2 alpha, 1 beta, 1 beta' and 1 omega subunit) to form the RNA polymerase holoenzyme that can initiate transcription. Interacts (via sigma-70 factor domain 4) with RsdA.

Sigma factors are initiation factors that promote the attachment of RNA polymerase to specific initiation sites and are then released. Extracytoplasmic function (ECF) sigma factors are held in an inactive form by an anti-sigma factor until released by regulated intramembrane proteolysis. The polypeptide is ECF RNA polymerase sigma factor SigD (sigD) (Mycobacterium bovis (strain ATCC BAA-935 / AF2122/97)).